The following is a 503-amino-acid chain: Na(+)-translocating NADH-quinone reductase subunit B (503 aa).

The next 5 helical transmembrane spans lie at 55 to 75 (MMLV…NSGL), 85 to 105 (PQIM…SFVS), 120 to 142 (IFLP…FAII), 161 to 181 (ILPP…GVVI), and 186 to 206 (FGGT…FLFF). Thr-248 is modified (FMN phosphoryl threonine). A run of 5 helical transmembrane segments spans residues 361 to 381 (TSTV…IASW), 387 to 407 (FGLS…LAAG), 417 to 437 (FFIP…LVFM), 452 to 472 (WFYG…NPAY), and 475 to 495 (GVML…RIAL).

The protein belongs to the NqrB/RnfD family. In terms of assembly, composed of six subunits; NqrA, NqrB, NqrC, NqrD, NqrE and NqrF. It depends on FMN as a cofactor.

It localises to the cell inner membrane. The enzyme catalyses a ubiquinone + n Na(+)(in) + NADH + H(+) = a ubiquinol + n Na(+)(out) + NAD(+). Functionally, NQR complex catalyzes the reduction of ubiquinone-1 to ubiquinol by two successive reactions, coupled with the transport of Na(+) ions from the cytoplasm to the periplasm. NqrA to NqrE are probably involved in the second step, the conversion of ubisemiquinone to ubiquinol. In Chlamydia muridarum (strain MoPn / Nigg), this protein is Na(+)-translocating NADH-quinone reductase subunit B.